Reading from the N-terminus, the 108-residue chain is Phosphoribosyl-AMP cyclohydrolase (108 aa).

Residue D78 coordinates Mg(2+). C79 contacts Zn(2+). The Mg(2+) site is built by D80 and D82. Residues C95 and C102 each coordinate Zn(2+).

The protein belongs to the PRA-CH family. In terms of assembly, homodimer. It depends on Mg(2+) as a cofactor. Zn(2+) serves as cofactor.

It is found in the cytoplasm. It carries out the reaction 1-(5-phospho-beta-D-ribosyl)-5'-AMP + H2O = 1-(5-phospho-beta-D-ribosyl)-5-[(5-phospho-beta-D-ribosylamino)methylideneamino]imidazole-4-carboxamide. Its pathway is amino-acid biosynthesis; L-histidine biosynthesis; L-histidine from 5-phospho-alpha-D-ribose 1-diphosphate: step 3/9. Its function is as follows. Catalyzes the hydrolysis of the adenine ring of phosphoribosyl-AMP. In Cenarchaeum symbiosum (strain A), this protein is Phosphoribosyl-AMP cyclohydrolase.